The chain runs to 435 residues: Protein SUPPRESSOR OF K(+) TRANSPORT GROWTH DEFECT 1 (435 aa).

The 66-residue stretch at 7-72 (EQAIEYVKQA…LRRAEEIRAV (66 aa)) folds into the MIT domain. The interval 73–113 (LDEGGSGPGSNGDAAVATRPKTKPKDGEGGGKDGEDPEQSK) is disordered. The segment covering 95-113 (KPKDGEGGGKDGEDPEQSK) has biased composition (basic and acidic residues). 172–179 (GPPGTGKS) provides a ligand contact to ATP.

Belongs to the AAA ATPase family. As to quaternary structure, monomer or homodimer (in nucleotide-free form). Decamer, dodecamer or tetradecamer of two stacked respective homooligomeric rings (when bound to ATP); the dodecameric form seems to be predominant. Interacts with members of the ESCRT-III subcomplex such as LIP5, VPS60-1, VPS2.1, VPS20.1, VPS20.2, VPS24-1, VPS32.1, VPS32.2, CHMP1A and VPS24. Binds to PROS/At4g24370. Mostly expressed in leaves, to a lower extent in seeds, and barely in roots and flowers (at protein level). Particularly expressed in trichomes.

Its subcellular location is the cytoplasm. The protein localises to the nucleus. It is found in the endosome. It localises to the multivesicular body membrane. The protein resides in the prevacuolar compartment membrane. The enzyme catalyses ATP + H2O = ADP + phosphate + H(+). With respect to regulation, activated by LIP5 and PROS. Functionally, involved in the transport of biosynthetic membrane proteins from the prevacuolar/endosomal compartment to the vacuole. Required for multivesicular body (MVB) protein sorting. Catalyzes the ATP-dependent dissociation of class E VPS proteins from endosomal membranes, such as the disassembly of the ESCRT-III complex. May also regulate cell cycle. Required during seed development for the formation of mucilage in seed coat and testa. Involved in the maintenance of Na(+)/K(+) homeostasis under salt stress. Required for cell expansion. The sequence is that of Protein SUPPRESSOR OF K(+) TRANSPORT GROWTH DEFECT 1 from Arabidopsis thaliana (Mouse-ear cress).